The chain runs to 303 residues: Aspartate carbamoyltransferase catalytic subunit (303 aa).

The carbamoyl phosphate site is built by arginine 49 and threonine 50. Lysine 77 contributes to the L-aspartate binding site. Arginine 99, histidine 126, and glutamine 129 together coordinate carbamoyl phosphate. Positions 159 and 211 each coordinate L-aspartate. Carbamoyl phosphate-binding residues include serine 252 and proline 253.

Belongs to the aspartate/ornithine carbamoyltransferase superfamily. ATCase family. Heterododecamer (2C3:3R2) of six catalytic PyrB chains organized as two trimers (C3), and six regulatory PyrI chains organized as three dimers (R2).

The catalysed reaction is carbamoyl phosphate + L-aspartate = N-carbamoyl-L-aspartate + phosphate + H(+). Its pathway is pyrimidine metabolism; UMP biosynthesis via de novo pathway; (S)-dihydroorotate from bicarbonate: step 2/3. Its function is as follows. Catalyzes the condensation of carbamoyl phosphate and aspartate to form carbamoyl aspartate and inorganic phosphate, the committed step in the de novo pyrimidine nucleotide biosynthesis pathway. This chain is Aspartate carbamoyltransferase catalytic subunit, found in Listeria monocytogenes serotype 4b (strain F2365).